Consider the following 224-residue polypeptide: E3 ubiquitin-protein ligase TRIM48 (224 aa).

The RING-type zinc finger occupies 31–72 (CPICMNYFIDPVTIDCGHSFCRPCFYLNWQDIPILTQCFECI). The B box-type zinc finger occupies 104 to 145 (SEEQMCGIHRETKKMFCEVDRSLLCLLCSSSQEHRYHRHCPA). The Zn(2+) site is built by Cys-109, His-112, Cys-131, and His-137.

Belongs to the TRIM/RBCC family. Interacts with PRMT1; the interaction leads to ubiquitination of PRMT1 by TRIM48. Interacts with MAP3K5. Interacts with STRAP.

It is found in the cytoplasm. The protein localises to the cytosol. It catalyses the reaction S-ubiquitinyl-[E2 ubiquitin-conjugating enzyme]-L-cysteine + [acceptor protein]-L-lysine = [E2 ubiquitin-conjugating enzyme]-L-cysteine + N(6)-ubiquitinyl-[acceptor protein]-L-lysine.. Its function is as follows. E3 ubiquitin-protein ligase which promotes K48-linked polyubiquitination of protein methyltransferase PRMT1, leading to PRMT1 degradation. This suppresses methylation of the PRMT1 substrate MAP3K5/ASK1, promoting its activation and increasing MAP3K5-dependent cell death induced by oxidative stress. TRIM48-mediated ubiquitination of PRMT1 also suppresses methylation of FOXO1 by PRMT1, leading to inhibition of FOXO1 transcriptional activity. The chain is E3 ubiquitin-protein ligase TRIM48 from Homo sapiens (Human).